The chain runs to 158 residues: NAD(P)H-quinone oxidoreductase subunit J, chloroplastic (158 aa).

The protein belongs to the complex I 30 kDa subunit family. As to quaternary structure, NDH is composed of at least 16 different subunits, 5 of which are encoded in the nucleus.

It is found in the plastid. It localises to the chloroplast thylakoid membrane. The catalysed reaction is a plastoquinone + NADH + (n+1) H(+)(in) = a plastoquinol + NAD(+) + n H(+)(out). It catalyses the reaction a plastoquinone + NADPH + (n+1) H(+)(in) = a plastoquinol + NADP(+) + n H(+)(out). In terms of biological role, NDH shuttles electrons from NAD(P)H:plastoquinone, via FMN and iron-sulfur (Fe-S) centers, to quinones in the photosynthetic chain and possibly in a chloroplast respiratory chain. The immediate electron acceptor for the enzyme in this species is believed to be plastoquinone. Couples the redox reaction to proton translocation, and thus conserves the redox energy in a proton gradient. The polypeptide is NAD(P)H-quinone oxidoreductase subunit J, chloroplastic (Solanum bulbocastanum (Wild potato)).